The primary structure comprises 108 residues: Insertion element IS6110 uncharacterized 12.0 kDa protein (108 aa).

This sequence belongs to the transposase 8 family.

This is Insertion element IS6110 uncharacterized 12.0 kDa protein from Mycobacterium bovis (strain ATCC BAA-935 / AF2122/97).